Here is a 993-residue protein sequence, read N- to C-terminus: Desmoglein-3 (993 aa).

The N-terminal stretch at 1-23 is a signal peptide; that stretch reads MTWLLFRTSGALAILMVLILVHG. The propeptide occupies 24 to 48; the sequence is ELRIETKGQHGEDETAIQGRRRYKR. 4 consecutive Cadherin domains span residues 48 to 156, 157 to 266, 267 to 386, and 383 to 494; these read REWV…APVF, SQSI…FPMF, KESQ…HPAS, and HPAS…CPTV. Topologically, residues 49-617 are extracellular; it reads EWVKFAKPCR…GKRPSGRLGS (569 aa). Asn109 and Asn179 each carry an N-linked (GlcNAc...) asparagine glycan. 2 N-linked (GlcNAc...) asparagine glycosylation sites follow: Asn458 and Asn544. A helical transmembrane segment spans residues 618–638; that stretch reads AAIGLLLLGLLLLLLAPLLLL. Topologically, residues 639–993 are cytoplasmic; the sequence is TCDYGVGPIG…CTEDPCSRLI (355 aa). Positions 641–713 are required for interaction with CTNND1 and localization at cell-cell junctions; that stretch reads DYGVGPIGGV…NTYAGGTVVE (73 aa). Desmoglein repeat repeat units lie at residues 903-929 and 930-960; these read LSAS…MVTE and TYSA…ERVI.

As to quaternary structure, homodimer. Part of a complex that contains DSG3, PKP1, YAP1 and YWHAG; the complex is required for localization of DSG3 and YAP1 to the cell membrane in keratinocytes. Interacts with PKP2. Interacts with CTNND1; the interaction facilitates DSG3 localization and retention at cell-cell junctions. Interacts with CDH1; the interaction is required for CDH1 localization to developing adherens junctions. Interacts with RAC1; the interaction is required for DSG3 translocation to cell-cell junctions, organization of cortical F-actin bundles and actin anchoring at cell-cell junctions. Interacts with DSC3; the interaction may limit the interaction of DSC3 with p38MAPK family members and therefore repress p38MAPK signaling activation.

The protein localises to the cell membrane. Its subcellular location is the cell junction. It is found in the desmosome. The protein resides in the cytoplasm. It localises to the tight junction. A component of desmosome cell-cell junctions which are required for positive regulation of cellular adhesion. Required for adherens and desmosome junction assembly in response to mechanical force in keratinocytes. Required for desmosome-mediated cell-cell adhesion of cells surrounding the telogen hair club and the basal layer of the outer root sheath epithelium, consequently is essential for the anchoring of telogen hairs in the hair follicle. Required for the maintenance of the epithelial barrier via promoting desmosome-mediated intercellular attachment of suprabasal epithelium to basal cells. May play a role in the protein stability of the desmosome plaque components DSP, JUP, PKP1, PKP2 and PKP3. Required for YAP1 localization at the plasma membrane in keratinocytes in response to mechanical strain, via the formation of an interaction complex composed of DSG3, PKP1 and YWHAG. May also be involved in the positive regulation of YAP1 target gene transcription and as a result cell proliferation. Positively regulates cellular contractility and cell junction formation via organization of cortical F-actin bundles and anchoring of actin to tight junctions, in conjunction with RAC1. The cytoplasmic pool of DSG3 is required for the localization of CDH1 and CTNNB1 at developing adherens junctions, potentially via modulation of SRC activity. Inhibits keratinocyte migration via suppression of p38MAPK signaling, may therefore play a role in moderating wound healing. The polypeptide is Desmoglein-3 (DSG3) (Canis lupus familiaris (Dog)).